Reading from the N-terminus, the 62-residue chain is Conorfamide-Tx1 (62 aa).

An N-terminal signal peptide occupies residues 1–19 (MSGRGFLLLALLLLVTVEA). A propeptide spanning residues 20–26 (TKVEKNK) is cleaved from the precursor. Y46 is subject to Tyrosine amide. Positions 47-62 (GRRDMQSPLLSERLRF) are excised as a propeptide.

It belongs to the FARP (FMRFamide related peptide) family. As to expression, expressed by the venom duct.

It localises to the secreted. In terms of biological role, this peptide does not show activity on human and mouse sensory neuron-specific G-protein coupled receptors MRGPRX1. The polypeptide is Conorfamide-Tx1 (Conus textile (Cloth-of-gold cone)).